Consider the following 268-residue polypeptide: Shikimate dehydrogenase (NADP(+)) (268 aa).

Shikimate is bound by residues 13-15 (SLS) and Thr-60. The active-site Proton acceptor is the Lys-64. Glu-76 contributes to the NADP(+) binding site. Shikimate-binding residues include Asn-85 and Asp-100. Residues 124 to 128 (GAGGA), 148 to 153 (NRTMAR), and Ile-209 contribute to the NADP(+) site. Tyr-211 serves as a coordination point for shikimate. Residue Gly-232 coordinates NADP(+).

Belongs to the shikimate dehydrogenase family. In terms of assembly, homodimer.

It carries out the reaction shikimate + NADP(+) = 3-dehydroshikimate + NADPH + H(+). It functions in the pathway metabolic intermediate biosynthesis; chorismate biosynthesis; chorismate from D-erythrose 4-phosphate and phosphoenolpyruvate: step 4/7. Involved in the biosynthesis of the chorismate, which leads to the biosynthesis of aromatic amino acids. Catalyzes the reversible NADPH linked reduction of 3-dehydroshikimate (DHSA) to yield shikimate (SA). This is Shikimate dehydrogenase (NADP(+)) from Staphylococcus aureus (strain MRSA252).